The sequence spans 215 residues: Ribose-5-phosphate isomerase A (215 aa).

Residues 26–29 (TGST), 79–82 (DGAD), and 92–95 (KGGG) contribute to the substrate site. Catalysis depends on Glu-101, which acts as the Proton acceptor. Lys-119 lines the substrate pocket.

The protein belongs to the ribose 5-phosphate isomerase family. In terms of assembly, homodimer.

The catalysed reaction is aldehydo-D-ribose 5-phosphate = D-ribulose 5-phosphate. Its pathway is carbohydrate degradation; pentose phosphate pathway; D-ribose 5-phosphate from D-ribulose 5-phosphate (non-oxidative stage): step 1/1. Its function is as follows. Catalyzes the reversible conversion of ribose-5-phosphate to ribulose 5-phosphate. The polypeptide is Ribose-5-phosphate isomerase A (Xanthomonas campestris pv. campestris (strain 8004)).